The following is a 173-amino-acid chain: Large ribosomal subunit protein uL10 (173 aa).

This sequence belongs to the universal ribosomal protein uL10 family. Part of the ribosomal stalk of the 50S ribosomal subunit. The N-terminus interacts with L11 and the large rRNA to form the base of the stalk. The C-terminus forms an elongated spine to which L12 dimers bind in a sequential fashion forming a multimeric L10(L12)X complex.

Functionally, forms part of the ribosomal stalk, playing a central role in the interaction of the ribosome with GTP-bound translation factors. This Bifidobacterium longum (strain DJO10A) protein is Large ribosomal subunit protein uL10.